The chain runs to 92 residues: Large ribosomal subunit protein eL43 (92 aa).

4 residues coordinate Zn(2+): C39, C42, C57, and C60. A C4-type zinc finger spans residues 39–60 (CSFCGKTKMKRRAVGIWHCGSC).

Belongs to the eukaryotic ribosomal protein eL43 family. In terms of assembly, component of the large ribosomal subunit.

It localises to the cytoplasm. In terms of biological role, component of the large ribosomal subunit. The ribosome is a large ribonucleoprotein complex responsible for the synthesis of proteins in the cell. The sequence is that of Large ribosomal subunit protein eL43 (Rpl37a) from Mus musculus (Mouse).